The chain runs to 516 residues: MSVDEICENTKMGREYALLGNYETSLVYYQGVLQQIQKLLTSVHEPQRKHQWQTIRQELSQEYEHVKNITKTLNGFKSEPAAPEPAPNHRAAPFSHHQHAAKPAAAEPARDPDVWPPPTPVDHRPSPPYQRAARKDPPRRSEPSKPANRAPGNDRGGRGPSDRRGDARSGGGGRGGARGSDKDKNRGGKSDKDKKAPSGEEGDEKKFDPAGYDKDLVENLERDIVQRNPNVHWADIAGLTEAKRLLEEAVVLPLWMPDYFKGIRRPWKGVLMVGPPGTGKTMLAKAVATECGTTFFNVSSASLTSKYHGESEKLVRLLFEMARFYAPSTIFIDEIDSICSKRGTGSEHEASRRVKSELLIQMDGVSGPSAGEESSKMVMVLAATNFPWDIDEALRRRLEKRIYIPLPEIDGREQLLRINLKEVPLADDIDLKSIAEKMDGYSGADITNVCRDASMMAMRRRIQGLRPEEIRHIPKEELNQPSTPADFLLALQKVSKSVGKEDLVKYMAWMEEFGSV.

Positions 75-212 are disordered; the sequence is GFKSEPAAPE…DEKKFDPAGY (138 aa). Composition is skewed to basic and acidic residues over residues 133–143 and 155–167; these read ARKDPPRRSEP and RGGRGPSDRRGDA. Residues 168 to 178 show a composition bias toward gly residues; it reads RSGGGGRGGAR. The segment covering 179–212 has biased composition (basic and acidic residues); the sequence is GSDKDKNRGGKSDKDKKAPSGEEGDEKKFDPAGY. An ATP-binding site is contributed by 274–281; that stretch reads GPPGTGKT.

This sequence belongs to the AAA ATPase family. Katanin p60 subunit A1 subfamily. Can homooligomerize into hexameric rings, which may be promoted by interaction with microtubules. Interacts with KATNB1, which may serve as a targeting subunit.

Its subcellular location is the cytoplasm. It localises to the cytoskeleton. It is found in the microtubule organizing center. The protein localises to the centrosome. The protein resides in the spindle pole. The enzyme catalyses n ATP + n H2O + a microtubule = n ADP + n phosphate + (n+1) alpha/beta tubulin heterodimers.. With respect to regulation, ATPase activity is stimulated by microtubules, which promote homooligomerization. ATP-dependent microtubule severing is stimulated by interaction with KATNB1. In terms of biological role, catalytic subunit of a complex which severs microtubules in an ATP-dependent manner. Microtubule severing may promote rapid reorganization of cellular microtubule arrays and the release of microtubules from the centrosome following nucleation. In mitotic spindles this could allow depolymerization of the microtubule end proximal to the centrosome, and subsequent poleward microtubule flux. In Strongylocentrotus purpuratus (Purple sea urchin), this protein is Katanin p60 ATPase-containing subunit A1.